Consider the following 156-residue polypeptide: Small ribosomal subunit protein uS7 (156 aa).

Belongs to the universal ribosomal protein uS7 family. Part of the 30S ribosomal subunit. Contacts proteins S9 and S11.

Functionally, one of the primary rRNA binding proteins, it binds directly to 16S rRNA where it nucleates assembly of the head domain of the 30S subunit. Is located at the subunit interface close to the decoding center, probably blocks exit of the E-site tRNA. The chain is Small ribosomal subunit protein uS7 from Alkaliphilus oremlandii (strain OhILAs) (Clostridium oremlandii (strain OhILAs)).